Reading from the N-terminus, the 2552-residue chain is Protein TIC 214 (2552 aa).

The next 6 membrane-spanning stretches (helical) occupy residues 15–35 (LIFG…SYLF), 54–74 (LSYG…YLPF), 78–98 (LSNF…QFFW), 119–136 (TLAF…YTFF), 154–174 (FKIL…LICI), and 243–263 (ILAT…PIPF). Positions 304-325 (EEQKKDEKSADEEKKRAVEEEN) are disordered. The span at 305 to 322 (EQKKDEKSADEEKKRAVE) shows a compositional bias: basic and acidic residues. The next 3 membrane-spanning stretches (helical) occupy residues 362–382 (TLYT…AFLF), 423–443 (PFLV…SVYI), and 452–472 (FLFN…HFFF). The interval 2045 to 2077 (MKAEEQKKIDEEYEEKKEKRKKEQEEQGKAFDE) is disordered. Residues 2416 to 2511 (RRRRQLRIVN…IKKKLMRLRF (96 aa)) adopt a coiled-coil conformation.

This sequence belongs to the TIC214 family. In terms of assembly, part of the Tic complex.

The protein resides in the plastid. It localises to the chloroplast inner membrane. Functionally, involved in protein precursor import into chloroplasts. May be part of an intermediate translocation complex acting as a protein-conducting channel at the inner envelope. The protein is Protein TIC 214 of Pelargonium hortorum (Common geranium).